The sequence spans 523 residues: Uridylate cyclase (523 aa).

Guanylate cyclase domains follow at residues valine 69 to alanine 209 and methionine 318 to arginine 438. A ribonucleoside 5'-triphosphate contacts are provided by tyrosine 72 and arginine 125. The Mn(2+) site is built by aspartate 323, isoleucine 324, and aspartate 372.

Belongs to the adenylyl cyclase class-4/guanylyl cyclase family. Pyrimidine cyclase subfamily. In terms of assembly, monomer. Requires Mn(2+) as cofactor.

The protein localises to the cytoplasm. It catalyses the reaction UTP = 3',5'-cyclic UMP + diphosphate. Its function is as follows. Pycsar (pyrimidine cyclase system for antiphage resistance) provides immunity against bacteriophage. The pyrimidine cyclase (PycC) synthesizes cyclic nucleotides in response to infection; these serve as specific second messenger signals. The signals activate the nearby effector, leading to bacterial cell death and abortive phage infection. A clade A Pycsar system. Functionally, the pyrimidine cyclase gene of a two-gene Pycsar system, generates cyclic UMP (cUMP) from UTP, has little to no activity on ATP, CTP or GTP. Expression of this and effector RsPycTM (AC A0A4R2UGS4) probably confers resistance to some bacteriophage. The genes are probably only expressed in response to bacteriophage infection. The polypeptide is Uridylate cyclase (Rhizobium sp. (strain PP-F2F-G36)).